The sequence spans 269 residues: 4-hydroxy-tetrahydrodipicolinate reductase (269 aa).

NAD(+) contacts are provided by residues 10–15 (GSSGRM) and glutamate 36. Arginine 37 contacts NADP(+). Residues 99–101 (GTT) and 123–126 (APNM) each bind NAD(+). Residue histidine 156 is the Proton donor/acceptor of the active site. Residue histidine 157 participates in (S)-2,3,4,5-tetrahydrodipicolinate binding. Lysine 160 functions as the Proton donor in the catalytic mechanism. (S)-2,3,4,5-tetrahydrodipicolinate is bound at residue 166 to 167 (GT).

The protein belongs to the DapB family.

The protein resides in the cytoplasm. It carries out the reaction (S)-2,3,4,5-tetrahydrodipicolinate + NAD(+) + H2O = (2S,4S)-4-hydroxy-2,3,4,5-tetrahydrodipicolinate + NADH + H(+). It catalyses the reaction (S)-2,3,4,5-tetrahydrodipicolinate + NADP(+) + H2O = (2S,4S)-4-hydroxy-2,3,4,5-tetrahydrodipicolinate + NADPH + H(+). It functions in the pathway amino-acid biosynthesis; L-lysine biosynthesis via DAP pathway; (S)-tetrahydrodipicolinate from L-aspartate: step 4/4. Its function is as follows. Catalyzes the conversion of 4-hydroxy-tetrahydrodipicolinate (HTPA) to tetrahydrodipicolinate. This chain is 4-hydroxy-tetrahydrodipicolinate reductase, found in Nitrosospira multiformis (strain ATCC 25196 / NCIMB 11849 / C 71).